The following is a 360-amino-acid chain: 3-dehydroquinate synthase (360 aa).

NAD(+)-binding positions include 72–77 (DGEEYK), 106–110 (GVIGD), 130–131 (TT), lysine 143, and lysine 152. Zn(2+)-binding residues include glutamate 185, histidine 248, and histidine 265.

It belongs to the sugar phosphate cyclases superfamily. Dehydroquinate synthase family. Requires Co(2+) as cofactor. The cofactor is Zn(2+). NAD(+) serves as cofactor.

The protein localises to the cytoplasm. The catalysed reaction is 7-phospho-2-dehydro-3-deoxy-D-arabino-heptonate = 3-dehydroquinate + phosphate. It participates in metabolic intermediate biosynthesis; chorismate biosynthesis; chorismate from D-erythrose 4-phosphate and phosphoenolpyruvate: step 2/7. Its function is as follows. Catalyzes the conversion of 3-deoxy-D-arabino-heptulosonate 7-phosphate (DAHP) to dehydroquinate (DHQ). This chain is 3-dehydroquinate synthase, found in Geotalea uraniireducens (strain Rf4) (Geobacter uraniireducens).